Here is a 157-residue protein sequence, read N- to C-terminus: Ribosome maturation factor RimP (157 aa).

The protein belongs to the RimP family.

Its subcellular location is the cytoplasm. Its function is as follows. Required for maturation of 30S ribosomal subunits. The protein is Ribosome maturation factor RimP of Petrotoga mobilis (strain DSM 10674 / SJ95).